We begin with the raw amino-acid sequence, 622 residues long: Low affinity potassium transport system protein Kup (622 aa).

Helical transmembrane passes span 9–29, 46–66, 101–121, 137–157, 165–185, 213–233, 247–267, 276–296, 337–357, 363–383, 395–415, and 416–436; these read LSAV…TSPL, PDVV…VVSV, ILVV…VITP, PALD…LFVI, VGKL…LLGL, VSFF…ALYA, WFTV…ALLL, PFFL…ATLA, IYIP…IIGF, LAAA…ILFC, FLVV…FSAN, and VLKL…MFII.

Belongs to the HAK/KUP transporter (TC 2.A.72) family.

The protein localises to the cell inner membrane. The enzyme catalyses K(+)(in) + H(+)(in) = K(+)(out) + H(+)(out). Responsible for the low-affinity transport of potassium into the cell. Likely operates as a K(+):H(+) symporter. This Yersinia pestis (strain Pestoides F) protein is Low affinity potassium transport system protein Kup.